The following is a 472-amino-acid chain: Argininosuccinate lyase (472 aa).

The protein belongs to the lyase 1 family. Argininosuccinate lyase subfamily.

The protein localises to the cytoplasm. It carries out the reaction 2-(N(omega)-L-arginino)succinate = fumarate + L-arginine. It participates in amino-acid biosynthesis; L-arginine biosynthesis; L-arginine from L-ornithine and carbamoyl phosphate: step 3/3. This is Argininosuccinate lyase from Maricaulis maris (strain MCS10) (Caulobacter maris).